A 182-amino-acid chain; its full sequence is Crossover junction endodeoxyribonuclease RuvC (182 aa).

Residues D7, E67, and D139 contribute to the active site. 3 residues coordinate Mg(2+): D7, E67, and D139.

The protein belongs to the RuvC family. Homodimer which binds Holliday junction (HJ) DNA. The HJ becomes 2-fold symmetrical on binding to RuvC with unstacked arms; it has a different conformation from HJ DNA in complex with RuvA. In the full resolvosome a probable DNA-RuvA(4)-RuvB(12)-RuvC(2) complex forms which resolves the HJ. The cofactor is Mg(2+).

The protein localises to the cytoplasm. It catalyses the reaction Endonucleolytic cleavage at a junction such as a reciprocal single-stranded crossover between two homologous DNA duplexes (Holliday junction).. Its function is as follows. The RuvA-RuvB-RuvC complex processes Holliday junction (HJ) DNA during genetic recombination and DNA repair. Endonuclease that resolves HJ intermediates. Cleaves cruciform DNA by making single-stranded nicks across the HJ at symmetrical positions within the homologous arms, yielding a 5'-phosphate and a 3'-hydroxyl group; requires a central core of homology in the junction. The consensus cleavage sequence is 5'-(A/T)TT(C/G)-3'. Cleavage occurs on the 3'-side of the TT dinucleotide at the point of strand exchange. HJ branch migration catalyzed by RuvA-RuvB allows RuvC to scan DNA until it finds its consensus sequence, where it cleaves and resolves the cruciform DNA. The protein is Crossover junction endodeoxyribonuclease RuvC of Bordetella parapertussis (strain 12822 / ATCC BAA-587 / NCTC 13253).